The following is a 1003-amino-acid chain: SWI/SNF-related matrix-associated actin-dependent regulator of chromatin subfamily A containing DEAD/H box 1 (1003 aa).

Disordered stretches follow at residues 15–130, 172–235, and 274–351; these read KKID…SKYK, GSSR…HFPD, and AKKE…EDYS. 3 stretches are compositionally biased toward basic and acidic residues: residues 172-188, 221-235, and 274-294; these read GSSRKRKLDEVPKDSSP, KQEASVKKLQRHFPD, and AKKEVSNGKEFSRSNKNDNKS. Positions 221-264 constitute a CUE domain; it reads KQEASVKKLQRHFPDLDKEELREVLQEHDWSFHEALEALKLFAE. Residues 295–311 show a composition bias toward low complexity; it reads SAKAKANQNSNKAMAQN. Residues 321–333 show a composition bias toward basic and acidic residues; it reads KYSENAKRDTRDL. The Helicase ATP-binding domain maps to 486–654; the sequence is ALLHKHKVNM…MSLLNFVMPH (169 aa). 499–506 contributes to the ATP binding site; the sequence is DEMGLGKT. Positions 605–608 match the DEGH box motif; that stretch reads DEGH. One can recognise a Helicase C-terminal domain in the interval 835 to 997; the sequence is ILEKLLSDIK…TIPLDMATLL (163 aa).

The protein belongs to the SNF2/RAD54 helicase family.

It is found in the nucleus. Its subcellular location is the chromosome. It catalyses the reaction ATP + H2O = ADP + phosphate + H(+). Functionally, DNA helicase that possesses intrinsic ATP-dependent nucleosome-remodeling activity and is both required for DNA repair and heterochromatin organization. Promotes DNA end resection of double-strand breaks (DSBs) following DNA damage: probably acts by weakening histone DNA interactions in nucleosomes flanking DSBs. Required for the restoration of heterochromatin organization after replication. This Xenopus tropicalis (Western clawed frog) protein is SWI/SNF-related matrix-associated actin-dependent regulator of chromatin subfamily A containing DEAD/H box 1 (smarcad1).